The chain runs to 253 residues: Dehydration-responsive element-binding protein 1D (253 aa).

The segment covering 1–22 (MEKNTAASGQLMTSSAEATPSS) has biased composition (polar residues). Residues 1–31 (MEKNTAASGQLMTSSAEATPSSPKRPAGRTK) form a disordered region. The AP2/ERF DNA-binding region spans 39-98 (VFRGVRWRGCAGRWVCKVRVPGSRGDRFWIGTSDTAEETARTHDAAMLALCGASASLNFA). Positions 131–153 (RRVPAPGRGSTATATATSGDAAS) are disordered. The segment covering 134–153 (PAPGRGSTATATATSGDAAS) has biased composition (low complexity).

The protein belongs to the AP2/ERF transcription factor family. ERF subfamily.

Its subcellular location is the nucleus. In terms of biological role, transcriptional activator that binds specifically to the DNA sequence 5'-[AG]CCGAC-3'. Binding to the C-repeat/DRE element mediates high salinity- and dehydration-inducible transcription. This Oryza sativa subsp. indica (Rice) protein is Dehydration-responsive element-binding protein 1D (DREB1D).